Reading from the N-terminus, the 144-residue chain is Large ribosomal subunit protein uL13 (144 aa).

The protein belongs to the universal ribosomal protein uL13 family. As to quaternary structure, part of the 50S ribosomal subunit.

This protein is one of the early assembly proteins of the 50S ribosomal subunit, although it is not seen to bind rRNA by itself. It is important during the early stages of 50S assembly. The chain is Large ribosomal subunit protein uL13 from Nitratidesulfovibrio vulgaris (strain DSM 19637 / Miyazaki F) (Desulfovibrio vulgaris).